We begin with the raw amino-acid sequence, 197 residues long: MTNYPQLNTEINGNEIKLIMHTNKGDMTFKLLPDVAPKTVENFVTHAKNGYYNGVTFHRVINDFMVQGGDPTATGMGGESIYGEPFEDEFSKEAFNIYGALSMANAGPHTNGSQFFIVQMNEVPESMLSQLADGGWPEPIVKAYAETGGTPWLDQKHTVFGQLIEGKDTLEDIANTKVGPQDKPLHDITIDSIEIVE.

The PPIase cyclophilin-type domain occupies 14–195 (NEIKLIMHTN…HDITIDSIEI (182 aa)).

This sequence belongs to the cyclophilin-type PPIase family.

It carries out the reaction [protein]-peptidylproline (omega=180) = [protein]-peptidylproline (omega=0). PPIases accelerate the folding of proteins. It catalyzes the cis-trans isomerization of proline imidic peptide bonds in oligopeptides. The protein is Putative peptidyl-prolyl cis-trans isomerase of Staphylococcus saprophyticus subsp. saprophyticus (strain ATCC 15305 / DSM 20229 / NCIMB 8711 / NCTC 7292 / S-41).